Consider the following 158-residue polypeptide: SsrA-binding protein (158 aa).

Belongs to the SmpB family.

It is found in the cytoplasm. Functionally, required for rescue of stalled ribosomes mediated by trans-translation. Binds to transfer-messenger RNA (tmRNA), required for stable association of tmRNA with ribosomes. tmRNA and SmpB together mimic tRNA shape, replacing the anticodon stem-loop with SmpB. tmRNA is encoded by the ssrA gene; the 2 termini fold to resemble tRNA(Ala) and it encodes a 'tag peptide', a short internal open reading frame. During trans-translation Ala-aminoacylated tmRNA acts like a tRNA, entering the A-site of stalled ribosomes, displacing the stalled mRNA. The ribosome then switches to translate the ORF on the tmRNA; the nascent peptide is terminated with the 'tag peptide' encoded by the tmRNA and targeted for degradation. The ribosome is freed to recommence translation, which seems to be the essential function of trans-translation. The protein is SsrA-binding protein of Bifidobacterium longum (strain DJO10A).